A 115-amino-acid polypeptide reads, in one-letter code: T cell receptor beta variable 16 (115 aa).

A signal peptide spans 1–20; it reads MSPIFTCITILCLLAAGSPG. In terms of domain architecture, Ig-like spans 21–115; sequence EEVAQTPKHL…SAVYFCASSQ (95 aa). Cysteine 42 and cysteine 111 form a disulfide bridge.

Alpha-beta TR is a heterodimer composed of an alpha and beta chain; disulfide-linked. The alpha-beta TR is associated with the transmembrane signaling CD3 coreceptor proteins to form the TR-CD3 (TcR or TCR). The assembly of alpha-beta TR heterodimers with CD3 occurs in the endoplasmic reticulum where a single alpha-beta TR heterodimer associates with one CD3D-CD3E heterodimer, one CD3G-CD3E heterodimer and one CD247 homodimer forming a stable octameric structure. CD3D-CD3E and CD3G-CD3E heterodimers preferentially associate with TR alpha and TR beta chains, respectively. The association of the CD247 homodimer is the last step of TcR assembly in the endoplasmic reticulum and is required for transport to the cell surface.

Its subcellular location is the cell membrane. V region of the variable domain of T cell receptor (TR) beta chain that participates in the antigen recognition. Alpha-beta T cell receptors are antigen specific receptors which are essential to the immune response and are present on the cell surface of T lymphocytes. Recognize peptide-major histocompatibility (MH) (pMH) complexes that are displayed by antigen presenting cells (APC), a prerequisite for efficient T cell adaptive immunity against pathogens. Binding of alpha-beta TR to pMH complex initiates TR-CD3 clustering on the cell surface and intracellular activation of LCK that phosphorylates the ITAM motifs of CD3G, CD3D, CD3E and CD247 enabling the recruitment of ZAP70. In turn ZAP70 phosphorylates LAT, which recruits numerous signaling molecules to form the LAT signalosome. The LAT signalosome propagates signal branching to three major signaling pathways, the calcium, the mitogen-activated protein kinase (MAPK) kinase and the nuclear factor NF-kappa-B (NF-kB) pathways, leading to the mobilization of transcription factors that are critical for gene expression and essential for T cell growth and differentiation. The T cell repertoire is generated in the thymus, by V-(D)-J rearrangement. This repertoire is then shaped by intrathymic selection events to generate a peripheral T cell pool of self-MH restricted, non-autoaggressive T cells. Post-thymic interaction of alpha-beta TR with the pMH complexes shapes TR structural and functional avidity. The polypeptide is T cell receptor beta variable 16 (Homo sapiens (Human)).